The following is a 548-amino-acid chain: Chaperone Ric-8A (548 aa).

Disordered regions lie at residues 443 to 484 (DPGH…EGMT) and 517 to 548 (GKMTSMEPHELHHLASQQFGESNNSDSDSDTN).

The protein belongs to the synembryn family.

The protein resides in the cytoplasm. The protein localises to the cell cortex. Chaperone that specifically binds and folds nascent G alpha proteins prior to G protein heterotrimer formation, promoting their stability and activity: folds GNAI1, GNAO1, GNA13 and GNAQ. Does not fold G(s) G-alpha proteins GNAS nor GNAL. Also acts as a guanine nucleotide exchange factor (GEF) for G alpha proteins by stimulating exchange of bound GDP for free GTP. The polypeptide is Chaperone Ric-8A (ric8a) (Danio rerio (Zebrafish)).